Consider the following 50-residue polypeptide: Defensin-like protein 1 (50 aa).

4 disulfide bridges follow: Cys2–Cys50, Cys14–Cys35, Cys20–Cys44, and Cys24–Cys46.

It belongs to the DEFL family.

It is found in the secreted. Possesses antimicrobial activity sensitive to inorganic cations. Binds specifically to the fungal plasma membrane. Has no inhibitory effect on insect gut alpha-amylase. The protein is Defensin-like protein 1 of Aesculus hippocastanum (Horse chestnut).